Here is a 162-residue protein sequence, read N- to C-terminus: 6,7-dimethyl-8-ribityllumazine synthase (162 aa).

Residues Phe-22, 56–58, and 80–82 contribute to the 5-amino-6-(D-ribitylamino)uracil site; these read TFE and AVI. Residue 85–86 coordinates (2S)-2-hydroxy-3-oxobutyl phosphate; sequence GT. Catalysis depends on His-88, which acts as the Proton donor. Met-113 contributes to the 5-amino-6-(D-ribitylamino)uracil binding site. Arg-127 provides a ligand contact to (2S)-2-hydroxy-3-oxobutyl phosphate.

The protein belongs to the DMRL synthase family.

The enzyme catalyses (2S)-2-hydroxy-3-oxobutyl phosphate + 5-amino-6-(D-ribitylamino)uracil = 6,7-dimethyl-8-(1-D-ribityl)lumazine + phosphate + 2 H2O + H(+). It participates in cofactor biosynthesis; riboflavin biosynthesis; riboflavin from 2-hydroxy-3-oxobutyl phosphate and 5-amino-6-(D-ribitylamino)uracil: step 1/2. Catalyzes the formation of 6,7-dimethyl-8-ribityllumazine by condensation of 5-amino-6-(D-ribitylamino)uracil with 3,4-dihydroxy-2-butanone 4-phosphate. This is the penultimate step in the biosynthesis of riboflavin. The sequence is that of 6,7-dimethyl-8-ribityllumazine synthase from Anaeromyxobacter dehalogenans (strain 2CP-C).